Consider the following 158-residue polypeptide: Urease accessory protein UreE (158 aa).

It belongs to the UreE family.

The protein localises to the cytoplasm. Its function is as follows. Involved in urease metallocenter assembly. Binds nickel. Probably functions as a nickel donor during metallocenter assembly. This is Urease accessory protein UreE from Klebsiella pneumoniae subsp. pneumoniae (strain ATCC 700721 / MGH 78578).